A 164-amino-acid chain; its full sequence is Transcriptional repressor NrdR (164 aa).

Residues 3–34 (CPKCNYNKSSVVDSRQAEDGNTIRRRRECEKC) fold into a zinc finger. The ATP-cone domain maps to 49-139 (LLVVKKDGTR…VYKSFKDVDE (91 aa)).

It belongs to the NrdR family. Zn(2+) serves as cofactor.

In terms of biological role, negatively regulates transcription of bacterial ribonucleotide reductase nrd genes and operons by binding to NrdR-boxes. This chain is Transcriptional repressor NrdR, found in Streptococcus uberis (strain ATCC BAA-854 / 0140J).